The chain runs to 579 residues: Acetolactate synthase (579 aa).

E61 is a binding site for thiamine diphosphate. FAD contacts are provided by residues R163, 274–295, and 317–336; these read HGTA…VGVR and DIDP…IVGD. The interval 408–487 is thiamine pyrophosphate binding; sequence QHQMWAGQFV…VKVIILNNGW (80 aa). D458 and N485 together coordinate Mg(2+).

The protein belongs to the TPP enzyme family. Requires Mg(2+) as cofactor. Thiamine diphosphate serves as cofactor.

The catalysed reaction is 2 pyruvate + H(+) = (2S)-2-acetolactate + CO2. The protein operates within amino-acid biosynthesis; L-isoleucine biosynthesis; L-isoleucine from 2-oxobutanoate: step 1/4. Its pathway is amino-acid biosynthesis; L-valine biosynthesis; L-valine from pyruvate: step 1/4. This Arthrospira platensis (Spirulina platensis) protein is Acetolactate synthase (ilvY).